We begin with the raw amino-acid sequence, 219 residues long: UPF0319 protein MS0844 (219 aa).

Residues 1–21 (MKFRLTALAVAALLTSTASFA) form the signal peptide.

This sequence belongs to the UPF0319 family.

The chain is UPF0319 protein MS0844 from Mannheimia succiniciproducens (strain KCTC 0769BP / MBEL55E).